The chain runs to 149 residues: Calmodulin-B (149 aa).

A2 bears the N-acetylalanine mark. 4 consecutive EF-hand domains span residues E8–N43, P44–E79, D81–K116, and L117–K149. Ca(2+) is bound by residues D21, D23, D25, T27, E32, D57, D59, N61, T63, E68, D94, D96, N98, and E105. K116 is subject to N6,N6,N6-trimethyllysine. Ca(2+) contacts are provided by D130, D132, D134, Q136, and E141.

This sequence belongs to the calmodulin family.

Functionally, calmodulin mediates the control of a large number of enzymes, ion channels and other proteins by Ca(2+). Among the enzymes to be stimulated by the calmodulin-Ca(2+) complex are a number of protein kinases and phosphatases. This is Calmodulin-B from Halocynthia roretzi (Sea squirt).